Consider the following 146-residue polypeptide: Ribosome maturation factor RimP (146 aa).

Belongs to the RimP family.

It is found in the cytoplasm. Its function is as follows. Required for maturation of 30S ribosomal subunits. The chain is Ribosome maturation factor RimP from Dechloromonas aromatica (strain RCB).